Here is an 819-residue protein sequence, read N- to C-terminus: MHAMESRVLLRTFCVILGLEAVWGLGVDPSLQIDVLSELELGESTAGVRQVPGLHNGTKAFLFQDSPRSIKAPIATAERFFQKLRNKHEFTILVTLKQIHLNSGVILSIHHLDHRYLELESSGHRNEIRLHYRSGTHRPHTEVFPYILADAKWHKLSLAFSASHLILHIDCNKIYERVVEMPSTDLPLGTTFWLGQRNNAHGYFKGIMQDVQLLVMPQGFIAQCPDLNRTCPTCNDFHGLVQKIMELQDILSKTSAKLSRAEQRMNRLDQCYCERTCTMKGTTYREFESWTDGCKNCTCLNGTIQCETLVCPAPDCPAKSAPAYVDGKCCKECKSTCQFQGRSYFEGERSTVFSASGMCVLYECKDQTMKLVENAGCPALDCPESHQIALSHSCCKVCKGYDFCSEKHTCMENSVCRNLNDRAVCSCRDGFRALREDNAYCEDIDECAEGRHYCRENTMCVNTPGSFLCICQTGYIRIDDYSCTEHDECLTNQHNCDENALCFNTVGGHNCVCKPGYTGNGTTCKAFCKDGCRNGGACIAANVCACPQGFTGPSCETDIDECSEGFVQCDSRANCINLPGWYHCECRDGYHDNGMFAPGGESCEDIDECGTGRHSCANDTICFNLDGGYDCRCPHGKNCTGDCVHDGKVKHNGQIWVLENDRCSVCSCQTGFVMCRRMVCDCENPTVDLSCCPECDPRLSSQCLHQNGETVYNSGDTWVQDCRQCRCLQGEVDCWPLACPEVECEFSVLPENECCPRCVTDPCQADTIRNDITKTCLDEMNVVRFTGSSWIKHGTECTLCQCKNGHVCCSVDPQCLQEL.

The first 24 residues, 1-24, serve as a signal peptide directing secretion; it reads MHAMESRVLLRTFCVILGLEAVWG. N-linked (GlcNAc...) asparagine glycosylation is found at Asn-56, Asn-228, Asn-296, and Asn-301. The 174-residue stretch at 58-231 folds into the Laminin G-like domain; sequence TKAFLFQDSP…AQCPDLNRTC (174 aa). The VWFC 1 domain occupies 275–334; that stretch reads RTCTMKGTTYREFESWTDGCKNCTCLNGTIQCETLVCPAPDCPAKSAPAYVDGKCCKECK. The region spanning 400–442 is the EGF-like 1 domain; it reads GYDFCSEKHTCMENSVCRNLNDRAVCSCRDGFRALREDNAYCE. 3 disulfides stabilise this stretch: Cys-404–Cys-416, Cys-410–Cys-425, and Cys-427–Cys-441. Ca(2+)-binding residues include Asp-443, Ile-444, and Glu-446. Residues 443–484 form the EGF-like 2; calcium-binding domain; sequence DIDECAEGRHYCRENTMCVNTPGSFLCICQTGYIRIDDYSCT. 9 disulfides stabilise this stretch: Cys-447–Cys-460, Cys-454–Cys-469, Cys-471–Cys-483, Cys-489–Cys-502, Cys-496–Cys-511, Cys-513–Cys-524, Cys-528–Cys-538, Cys-532–Cys-544, and Cys-546–Cys-555. Residues Asn-462, Thr-463, and Ser-466 each contribute to the Ca(2+) site. The 41-residue stretch at 485–525 folds into the EGF-like 3; calcium-binding domain; the sequence is EHDECLTNQHNCDENALCFNTVGGHNCVCKPGYTGNGTTCK. N-linked (GlcNAc...) asparagine glycosylation occurs at Asn-520. The region spanning 526–556 is the EGF-like 4 domain; that stretch reads AFCKDGCRNGGACIAANVCACPQGFTGPSCE. The O-linked (GlcNAc...) threonine glycan is linked to Thr-551. Positions 558, 559, and 561 each coordinate Ca(2+). Positions 558–604 constitute an EGF-like 5; calcium-binding domain; sequence DIDECSEGFVQCDSRANCINLPGWYHCECRDGYHDNGMFAPGGESCE. Intrachain disulfides connect Cys-562-Cys-575, Cys-569-Cys-584, and Cys-586-Cys-603. The Ca(2+) site is built by Asn-577, Leu-578, and Trp-581. Ca(2+) contacts are provided by Asp-605, Ile-606, and Glu-608. Residues 605 to 640 enclose the EGF-like 6; calcium-binding domain; it reads DIDECGTGRHSCANDTICFNLDGGYDCRCPHGKNCT. 3 cysteine pairs are disulfide-bonded: Cys-609–Cys-622, Cys-616–Cys-631, and Cys-633–Cys-639. Asn-618 is a glycosylation site (N-linked (GlcNAc...) asparagine). Residues Asn-624, Leu-625, and Gly-628 each contribute to the Ca(2+) site. Asn-638 carries an N-linked (GlcNAc...) asparagine glycan. 2 consecutive VWFC domains span residues 641–696 and 701–759; these read GDCV…PECD and SQCL…PRCV.

Homotrimer. Binds to PRKCB. Interacts with NICOL1; this interaction triggers epididymal differentiation. As to quaternary structure, binds to PRKCB. Widely expressed. Expressed in cortical astrocytes but not in neuron. As to expression, widely expressed in brain. High expression is observed in telencephalic and diencephalic glutamatergic neurons, while no expression is found in GABAergic and GNRH neurons.

The protein resides in the secreted. It is found in the cytoplasm. Plays multiple roles In neural tissues, regulates neuronal proliferation, survival, differentiation, polarization, as well as axon guidance and synaptic functions. Plays an important role in axon development during neuronal differentiation through the MAPK intracellular signaling pathway. Via binding to its receptor ROBO3, plays a role in axon guidance, functioning as a repulsive axon guidance cue that contributes to commissural axon guidance to the midline. Required for neuron survival through the modulation of MAPK signaling pathways too. Involved in the regulation of hypothalamic GNRH secretion and the control of puberty. Functionally, epididymal-secreted protein that signals through a ROS1-pathway to regulate the epididymal initial segment (IS) maturation, sperm maturation and male fertility. Its function is as follows. Acts as an endogenous inhibitor of PRKCB in glia. This Rattus norvegicus (Rat) protein is Protein kinase C-binding protein NELL2 (Nell2).